The primary structure comprises 259 residues: Indole-3-glycerol phosphate synthase (259 aa).

The protein belongs to the TrpC family.

It carries out the reaction 1-(2-carboxyphenylamino)-1-deoxy-D-ribulose 5-phosphate + H(+) = (1S,2R)-1-C-(indol-3-yl)glycerol 3-phosphate + CO2 + H2O. It participates in amino-acid biosynthesis; L-tryptophan biosynthesis; L-tryptophan from chorismate: step 4/5. The polypeptide is Indole-3-glycerol phosphate synthase (Dehalococcoides mccartyi (strain ATCC BAA-2266 / KCTC 15142 / 195) (Dehalococcoides ethenogenes (strain 195))).